The chain runs to 321 residues: Lipoyl synthase (321 aa).

Residues C68, C73, C79, C94, C98, C101, and S308 each coordinate [4Fe-4S] cluster. The Radical SAM core domain maps to 80-297 (FNHGTATFMI…KAEALAMGFT (218 aa)).

This sequence belongs to the radical SAM superfamily. Lipoyl synthase family. [4Fe-4S] cluster serves as cofactor.

It is found in the cytoplasm. It carries out the reaction [[Fe-S] cluster scaffold protein carrying a second [4Fe-4S](2+) cluster] + N(6)-octanoyl-L-lysyl-[protein] + 2 oxidized [2Fe-2S]-[ferredoxin] + 2 S-adenosyl-L-methionine + 4 H(+) = [[Fe-S] cluster scaffold protein] + N(6)-[(R)-dihydrolipoyl]-L-lysyl-[protein] + 4 Fe(3+) + 2 hydrogen sulfide + 2 5'-deoxyadenosine + 2 L-methionine + 2 reduced [2Fe-2S]-[ferredoxin]. Its pathway is protein modification; protein lipoylation via endogenous pathway; protein N(6)-(lipoyl)lysine from octanoyl-[acyl-carrier-protein]: step 2/2. Its function is as follows. Catalyzes the radical-mediated insertion of two sulfur atoms into the C-6 and C-8 positions of the octanoyl moiety bound to the lipoyl domains of lipoate-dependent enzymes, thereby converting the octanoylated domains into lipoylated derivatives. This Salmonella arizonae (strain ATCC BAA-731 / CDC346-86 / RSK2980) protein is Lipoyl synthase.